The sequence spans 323 residues: Glyoxylate/hydroxypyruvate reductase HPR3 (323 aa).

NADP(+)-binding positions include 160–163, 182–184, and 238–240; these read LGSI, SRS, and VGR. Residues Arg240 and Glu269 contribute to the active site. Catalysis depends on His287, which acts as the Proton donor. An NADP(+)-binding site is contributed by 287-289; that stretch reads HFA.

The protein belongs to the D-isomer specific 2-hydroxyacid dehydrogenase family. GyaR subfamily. Homodimer.

The catalysed reaction is glycolate + NADP(+) = glyoxylate + NADPH + H(+). The enzyme catalyses (R)-glycerate + NADP(+) = 3-hydroxypyruvate + NADPH + H(+). Inhibited by oxalate. Functionally, catalyzes the NADPH-dependent reduction of glyoxylate and hydroxypyruvate (HP) into glycolate and glycerate. Mostly active in the presence of NADPH and glyoxylate. The sequence is that of Glyoxylate/hydroxypyruvate reductase HPR3 (HPR3) from Arabidopsis thaliana (Mouse-ear cress).